A 351-amino-acid chain; its full sequence is MIAEVQEKTISSSPSIISEEEALQILKGEVPLLPVVAKASEERFRHFGNRVRIHILDNIKNGYCPEDCGYCAQRKGGESGIQEYSLKSPEEIWEDAKKAKENGAYRFCMVTSGRGPTDKAVDKLAETISKINGELGMKVCLSAGILDGKKAKTLKDAGLDRYNHNLNTSESKYNEICSTHTFKDRLTTLEAAKEAEIGLCSGIIVGMGEELKDIVQVAFELKRLGVISIPVNFFIPIKGHAIQKSTLTPEFCVRVLSVFRLVNPDSEIRVGAGREGHLGFLQSMALYVANSLFAEGYLNVKGSEMEQTMNLIRDCNMVPEFTEGIPEGWEDYDSKFLYDEKNFPELYKHKK.

Residues 49–265 (NRVRIHILDN…LSVFRLVNPD (217 aa)) enclose the Radical SAM core domain. 3 residues coordinate [4Fe-4S] cluster: Cys-64, Cys-68, and Cys-71. Residues Cys-108, Cys-140, Cys-200, and Arg-269 each contribute to the [2Fe-2S] cluster site.

It belongs to the radical SAM superfamily. Biotin synthase family. Homodimer. [4Fe-4S] cluster is required as a cofactor. Requires [2Fe-2S] cluster as cofactor.

The catalysed reaction is (4R,5S)-dethiobiotin + (sulfur carrier)-SH + 2 reduced [2Fe-2S]-[ferredoxin] + 2 S-adenosyl-L-methionine = (sulfur carrier)-H + biotin + 2 5'-deoxyadenosine + 2 L-methionine + 2 oxidized [2Fe-2S]-[ferredoxin]. It functions in the pathway cofactor biosynthesis; biotin biosynthesis; biotin from 7,8-diaminononanoate: step 2/2. Catalyzes the conversion of dethiobiotin (DTB) to biotin by the insertion of a sulfur atom into dethiobiotin via a radical-based mechanism. The sequence is that of Biotin synthase from Leptospira biflexa serovar Patoc (strain Patoc 1 / Ames).